The primary structure comprises 446 residues: Serum factor response D (446 aa).

The region spanning 1-61 is the MADS-box domain; sequence MGRKKIKIQR…PNAKEKYFQY (61 aa). 3 disordered regions span residues 95–195, 210–296, and 319–432; these read KKEK…FNSS, TQEN…CQQV, and CSSP…SNLN. Basic and acidic residues predominate over residues 112 to 121; it reads SHSEEEDHKS. Over residues 133–142 the composition is skewed to basic residues; it reads HHNHHHHHHQ. Low complexity-rich tracts occupy residues 143–195 and 216–282; these read YNNN…FNSS and HYNN…NNNN. The segment covering 322 to 355 has biased composition (polar residues); the sequence is PEDTSPMTSPRTPPFSSTNTNTLQTSPNSQQKSK. The segment covering 365 to 432 has biased composition (low complexity); sequence NNNQNNNNQN…SPTSSSSNLN (68 aa).

The protein resides in the nucleus. This Dictyostelium discoideum (Social amoeba) protein is Serum factor response D (srfD).